A 396-amino-acid polypeptide reads, in one-letter code: Cysteine desulfurase (396 aa).

Pyridoxal 5'-phosphate is bound by residues 71 to 72 (GT), N148, Q176, and 196 to 198 (SGH). Position 199 is an N6-(pyridoxal phosphate)lysine (K199). Residue T231 coordinates pyridoxal 5'-phosphate. C319 functions as the Cysteine persulfide intermediate in the catalytic mechanism. C319 serves as a coordination point for [2Fe-2S] cluster.

It belongs to the class-V pyridoxal-phosphate-dependent aminotransferase family. NifS/IscS subfamily. As to quaternary structure, homodimer. Pyridoxal 5'-phosphate is required as a cofactor.

It catalyses the reaction (sulfur carrier)-H + L-cysteine = (sulfur carrier)-SH + L-alanine. In terms of biological role, catalyzes the removal of elemental sulfur atoms from cysteine to produce alanine. Seems to participate in the biosynthesis of the nitrogenase metalloclusters by providing the inorganic sulfur required for the Fe-S core formation. This is Cysteine desulfurase from Azotobacter chroococcum mcd 1.